We begin with the raw amino-acid sequence, 57 residues long: Large ribosomal subunit protein uL30 (57 aa).

It belongs to the universal ribosomal protein uL30 family. Part of the 50S ribosomal subunit.

The chain is Large ribosomal subunit protein uL30 from Buchnera aphidicola subsp. Cinara cedri (strain Cc).